A 310-amino-acid polypeptide reads, in one-letter code: 4-hydroxyproline 2-epimerase (310 aa).

Cys-88 (proton acceptor) is an active-site residue. Substrate is bound by residues 89-90, His-208, and Asp-232; that span reads GH. Catalysis depends on Cys-236, which acts as the Proton donor. 237–238 contributes to the substrate binding site; that stretch reads GT.

This sequence belongs to the proline racemase family.

The catalysed reaction is trans-4-hydroxy-L-proline = cis-4-hydroxy-D-proline. Catalyzes the epimerization of trans-4-hydroxy-L-proline (t4LHyp) to cis-4-hydroxy-D-proline (c4DHyp). Is likely involved in a degradation pathway that converts t4LHyp to alpha-ketoglutarate. Can also catalyze the dehydration of trans-3-hydroxy-L-proline (t3LHyp) to Delta(1)-pyrroline-2-carboxylate (Pyr2C), albeit with 42-fold lower efficiency. Displays no proline racemase activity. This chain is 4-hydroxyproline 2-epimerase, found in Burkholderia thailandensis (strain ATCC 700388 / DSM 13276 / CCUG 48851 / CIP 106301 / E264).